We begin with the raw amino-acid sequence, 103 residues long: Enhancer of rudimentary homolog (103 aa).

Belongs to the E(R) family. In terms of assembly, homodimer.

Functionally, may have a role in the cell cycle. This Aedes aegypti (Yellowfever mosquito) protein is Enhancer of rudimentary homolog.